The primary structure comprises 379 residues: Beta sliding clamp (379 aa).

Belongs to the beta sliding clamp family. In terms of assembly, forms a ring-shaped head-to-tail homodimer around DNA which binds and tethers DNA polymerases and other proteins to the DNA. The DNA replisome complex has a single clamp-loading complex (3 tau and 1 each of delta, delta', psi and chi subunits) which binds 3 Pol III cores (1 core on the leading strand and 2 on the lagging strand) each with a beta sliding clamp dimer. Additional proteins in the replisome are other copies of gamma, psi and chi, Ssb, DNA helicase and RNA primase.

The protein resides in the cytoplasm. In terms of biological role, confers DNA tethering and processivity to DNA polymerases and other proteins. Acts as a clamp, forming a ring around DNA (a reaction catalyzed by the clamp-loading complex) which diffuses in an ATP-independent manner freely and bidirectionally along dsDNA. Initially characterized for its ability to contact the catalytic subunit of DNA polymerase III (Pol III), a complex, multichain enzyme responsible for most of the replicative synthesis in bacteria; Pol III exhibits 3'-5' exonuclease proofreading activity. The beta chain is required for initiation of replication as well as for processivity of DNA replication. The sequence is that of Beta sliding clamp (dnaN) from Rickettsia bellii (strain RML369-C).